Here is a 229-residue protein sequence, read N- to C-terminus: MVHPFLFLQFFRHLLTPLGISEGGADAIAYTWLIIALLLIVSILATKGLKSVPGKMQNFMEVIIGGIENMVVETMGEHGKPFFPLIATLALFILVSNLIGLIPGFFPPTANINTTAACAVIVFVTTHIVGIKEHGVKYIKHFLGPILWLAPMMFFIEVIGHFSRVISLTLRLFGNMNGHELVLMIFFGLAPFLVPLPMMLMGVLVSFIQAFVFMLLAMIYIQGSLEEGH.

Helical transmembrane passes span 25 to 45 (ADAI…SILA), 82 to 102 (FFPL…IGLI), 111 to 131 (NINT…IVGI), 142 to 162 (FLGP…IGHF), 181 to 201 (LVLM…MMLM), and 202 to 222 (GVLV…IYIQ).

It belongs to the ATPase A chain family. In terms of assembly, F-type ATPases have 2 components, CF(1) - the catalytic core - and CF(0) - the membrane proton channel. CF(1) has five subunits: alpha(3), beta(3), gamma(1), delta(1), epsilon(1). CF(0) has three main subunits: a(1), b(2) and c(9-12). The alpha and beta chains form an alternating ring which encloses part of the gamma chain. CF(1) is attached to CF(0) by a central stalk formed by the gamma and epsilon chains, while a peripheral stalk is formed by the delta and b chains.

The protein resides in the cell inner membrane. Key component of the proton channel; it plays a direct role in the translocation of protons across the membrane. In Geotalea daltonii (strain DSM 22248 / JCM 15807 / FRC-32) (Geobacter daltonii), this protein is ATP synthase subunit a.